The sequence spans 595 residues: UvrABC system protein C (595 aa).

Positions 14–91 constitute a GIY-YIG domain; it reads SNPGCYLHKD…IQENMPKFNI (78 aa). The UVR domain occupies 196–231; sequence DKIVNQLKAKMKDMSDQMAFERAAEYRDLIEAVSTL.

Belongs to the UvrC family. Interacts with UvrB in an incision complex.

The protein resides in the cytoplasm. The UvrABC repair system catalyzes the recognition and processing of DNA lesions. UvrC both incises the 5' and 3' sides of the lesion. The N-terminal half is responsible for the 3' incision and the C-terminal half is responsible for the 5' incision. The polypeptide is UvrABC system protein C (Streptococcus thermophilus (strain ATCC BAA-491 / LMD-9)).